A 359-amino-acid chain; its full sequence is Ribosomal RNA large subunit methyltransferase M (359 aa).

S-adenosyl-L-methionine-binding positions include Ser186, 219–222, Asp238, Asp258, and Asp275; that span reads CPGG. Lys304 serves as the catalytic Proton acceptor.

It belongs to the class I-like SAM-binding methyltransferase superfamily. RNA methyltransferase RlmE family. RlmM subfamily. Monomer.

It is found in the cytoplasm. It catalyses the reaction cytidine(2498) in 23S rRNA + S-adenosyl-L-methionine = 2'-O-methylcytidine(2498) in 23S rRNA + S-adenosyl-L-homocysteine + H(+). In terms of biological role, catalyzes the 2'-O-methylation at nucleotide C2498 in 23S rRNA. This chain is Ribosomal RNA large subunit methyltransferase M, found in Aliivibrio fischeri (strain MJ11) (Vibrio fischeri).